Here is a 559-residue protein sequence, read N- to C-terminus: WD repeat-containing protein JIP5 (559 aa).

9 WD repeats span residues 26–67 (QYSD…NYLQ), 77–116 (ADGK…WKTK), 117–156 (RHKG…VVKK), 162–201 (DNGG…ETNR), 207–247 (NGDD…ESDF), 265–306 (DQED…LEDQ), 313–347 (AKEE…DIKK), 354–394 (RNHS…SEEE), and 428–470 (DSDG…SDDE). 2 disordered regions span residues 386–500 (SRNE…LIGL) and 515–559 (EESE…FEGL). The span at 391–417 (SEEEDDEESESFSDSDSDSDSDSDSDS) shows a compositional bias: acidic residues. Over residues 418-428 (DSDRDRDRDSD) the composition is skewed to basic and acidic residues. Positions 482–494 (DMDDIDEGSDSSE) are enriched in acidic residues. Basic and acidic residues predominate over residues 520–534 (EGEKLQKKRKNEPSK). A compositionally biased stretch (basic residues) spans 535–544 (KNTKNLKKVK).

The protein belongs to the WD repeat WDR55 family.

The protein resides in the nucleus. Its subcellular location is the nucleolus. This Vanderwaltozyma polyspora (strain ATCC 22028 / DSM 70294 / BCRC 21397 / CBS 2163 / NBRC 10782 / NRRL Y-8283 / UCD 57-17) (Kluyveromyces polysporus) protein is WD repeat-containing protein JIP5 (JIP5).